A 306-amino-acid polypeptide reads, in one-letter code: Pre-mRNA-splicing factor cwf26 (306 aa).

Residues 130 to 152 (KAEERRKREEKSSNLDEEELRKS) form a disordered region. A coiled-coil region spans residues 130 to 198 (KAEERRKREE…KEQQQGVVQV (69 aa)).

The protein belongs to the CWC26 family. In terms of assembly, belongs to the 40S cdc5-associated complex (or cwf complex), a spliceosome sub-complex reminiscent of a late-stage spliceosome composed of the U2, U5 and U6 snRNAs and at least brr2, cdc5, cwf2/prp3, cwf3/syf1, cwf4/syf3, cwf5/ecm2, spp42/cwf6, cwf7/spf27, cwf8, cwf9, cwf10, cwf11, cwf12, prp45/cwf13, cwf14, cwf15, cwf16, cwf17, cwf18, cwf19, cwf20, cwf21, cwf22, cwf23, cwf24, cwf25, cwf26, cyp7/cwf27, cwf28, cwf29/ist3, lea1, msl1, prp5/cwf1, prp10, prp12/sap130, prp17, prp22, sap61, sap62, sap114, sap145, slu7, smb1, smd1, smd3, smf1, smg1 and syf2.

It is found in the cytoplasm. The protein localises to the nucleus. Functionally, involved in mRNA splicing. This Schizosaccharomyces pombe (strain 972 / ATCC 24843) (Fission yeast) protein is Pre-mRNA-splicing factor cwf26 (cwf26).